The primary structure comprises 552 residues: Cilia- and flagella- associated protein 210 (552 aa).

4 coiled-coil regions span residues 53–143 (DEWK…NAKQ), 186–307 (EEQL…KKRL), 348–409 (IARD…VMKA), and 460–488 (TEAL…TTNK). A disordered region spans residues 216–238 (KDHLKQIKEHEEEEERRKKYEEK).

Microtubule inner protein component of sperm flagellar doublet microtubules. In terms of tissue distribution, expressed in airway epithelial cells.

It is found in the cytoplasm. The protein localises to the cytoskeleton. The protein resides in the cilium axoneme. It localises to the flagellum axoneme. Microtubule inner protein (MIP) part of the dynein-decorated doublet microtubules (DMTs) in cilia axoneme, which is required for motile cilia beating. The chain is Cilia- and flagella- associated protein 210 from Homo sapiens (Human).